An 86-amino-acid polypeptide reads, in one-letter code: U1-theraphotoxin-Pc1a (86 aa).

Residues 1–21 form the signal peptide; the sequence is MMRVLIVTAVFTFFLVLTSSG. Positions 22–49 are excised as a propeptide; that stretch reads HDEDNEQRNILEGMFLDRAIETPKGLEE. Intrachain disulfides connect Cys53–Cys70, Cys60–Cys75, and Cys69–Cys80. The residue at position 84 (Val84) is a Valine amide.

Expressed by the venom gland.

It localises to the secreted. In terms of biological role, possesses strong antiplasmodial activity against the intra-erythrocyte stage of P.falciparum in vitro. IC(50) for inhibiting P.falciparum growth is 1.59 uM. Interacts with infected and healthy erythrocytes. Does not lyse erythrocytes, is not cytotoxic to nucleated mammalian cells, and does not inhibit neuromuscular function. Has neither antibacterial nor antifungal activity. The chain is U1-theraphotoxin-Pc1a from Psalmopoeus cambridgei (Trinidad chevron tarantula).